We begin with the raw amino-acid sequence, 260 residues long: Electron transfer flavoprotein subunit beta (260 aa).

The protein belongs to the ETF beta-subunit/FixA family. As to quaternary structure, heterodimer of an alpha and a beta subunit. FAD is required as a cofactor. Requires AMP as cofactor.

Functionally, the electron transfer flavoprotein serves as a specific electron acceptor for other dehydrogenases. It transfers the electrons to the main respiratory chain via ETF-ubiquinone oxidoreductase (ETF dehydrogenase). In Thermoanaerobacterium thermosaccharolyticum (strain ATCC 7956 / DSM 571 / NCIMB 9385 / NCA 3814 / NCTC 13789 / WDCM 00135 / 2032) (Clostridium thermosaccharolyticum), this protein is Electron transfer flavoprotein subunit beta (etfB).